The following is a 232-amino-acid chain: tRNA (guanine-N(1)-)-methyltransferase (232 aa).

Residues glycine 111 and 131–136 (IGDYIL) contribute to the S-adenosyl-L-methionine site.

It belongs to the RNA methyltransferase TrmD family. Homodimer.

The protein localises to the cytoplasm. It carries out the reaction guanosine(37) in tRNA + S-adenosyl-L-methionine = N(1)-methylguanosine(37) in tRNA + S-adenosyl-L-homocysteine + H(+). Functionally, specifically methylates guanosine-37 in various tRNAs. In Bartonella bacilliformis (strain ATCC 35685 / KC583 / Herrer 020/F12,63), this protein is tRNA (guanine-N(1)-)-methyltransferase.